Here is a 363-residue protein sequence, read N- to C-terminus: Phospho-N-acetylmuramoyl-pentapeptide-transferase (363 aa).

A run of 9 helical transmembrane segments spans residues 13 to 33 (ISGI…AFFL), 49 to 69 (LPLL…IPLL), 95 to 115 (MGGI…SNFA), 119 to 139 (LAVS…DWQI), 154 to 174 (LALQ…NQPS), 183 to 203 (WVSF…FVLV), 224 to 244 (AIAL…LMVF), 281 to 301 (AVAL…IFFV), and 343 to 363 (ELQV…ICLA).

Belongs to the glycosyltransferase 4 family. MraY subfamily. It depends on Mg(2+) as a cofactor.

It is found in the cell inner membrane. It catalyses the reaction UDP-N-acetyl-alpha-D-muramoyl-L-alanyl-gamma-D-glutamyl-meso-2,6-diaminopimeloyl-D-alanyl-D-alanine + di-trans,octa-cis-undecaprenyl phosphate = di-trans,octa-cis-undecaprenyl diphospho-N-acetyl-alpha-D-muramoyl-L-alanyl-D-glutamyl-meso-2,6-diaminopimeloyl-D-alanyl-D-alanine + UMP. The protein operates within cell wall biogenesis; peptidoglycan biosynthesis. Catalyzes the initial step of the lipid cycle reactions in the biosynthesis of the cell wall peptidoglycan: transfers peptidoglycan precursor phospho-MurNAc-pentapeptide from UDP-MurNAc-pentapeptide onto the lipid carrier undecaprenyl phosphate, yielding undecaprenyl-pyrophosphoryl-MurNAc-pentapeptide, known as lipid I. The chain is Phospho-N-acetylmuramoyl-pentapeptide-transferase from Nostoc punctiforme (strain ATCC 29133 / PCC 73102).